The following is a 390-amino-acid chain: Protein STRICTOSIDINE SYNTHASE-LIKE 3 (390 aa).

Residues 1–25 (MAMSILAKIFLVFAIYCAIDPFSHS) form the signal peptide. N-linked (GlcNAc...) asparagine glycosylation is found at Asn-95 and Asn-108.

This sequence belongs to the strictosidine synthase family.

The protein localises to the vacuole. In Arabidopsis thaliana (Mouse-ear cress), this protein is Protein STRICTOSIDINE SYNTHASE-LIKE 3.